Here is a 180-residue protein sequence, read N- to C-terminus: UPF0227 protein VV2369 (180 aa).

It belongs to the UPF0227 family.

This Vibrio vulnificus (strain YJ016) protein is UPF0227 protein VV2369.